A 360-amino-acid polypeptide reads, in one-letter code: uncharacterized protein (360 aa).

Transmembrane regions (helical) follow at residues 26–48 (SVCY…SGAT), 58–80 (LHPL…ASVL), 89–111 (VMGL…NIAH), 126–148 (LSTG…SILA), 169–191 (RLAY…PTAL), 195–214 (IPSV…YALL), and 227–249 (CALC…SHMV).

Its subcellular location is the cell membrane. This is an uncharacterized protein from Treponema pallidum (strain Nichols).